The following is a 101-amino-acid chain: Multivesicular body sorting factor 12 (101 aa).

At Met-1 the chain carries N-acetylmethionine. A Phosphoserine modification is found at Ser-94.

As to quaternary structure, component of the ESCRT-I complex (endosomal sorting complex required for transport I) which consists of STP22, VPS28, SRN2 and MVB12 in a 1:1:1:1 stoichiometry. Interacts with STP22 and SRN2.

It is found in the cytoplasm. The protein localises to the endosome. It localises to the late endosome membrane. Component of the ESCRT-I complex, a regulator of vesicular trafficking process. Binds to ubiquitinated cargo proteins and is required for the sorting of endocytic ubiquitinated cargos into multivesicular bodies (MVBs). Appears to be involved in cargo sorting and release of the ESCRT-I complex from the MVBs. The chain is Multivesicular body sorting factor 12 (MVB12) from Saccharomyces cerevisiae (strain ATCC 204508 / S288c) (Baker's yeast).